The primary structure comprises 732 residues: Cullin-3A (732 aa).

In terms of domain architecture, Cullin neddylation spans 662–724 (DRKPQIEAAI…RDFLERDSTD (63 aa)). Lys676 participates in a covalent cross-link: Glycyl lysine isopeptide (Lys-Gly) (interchain with G-Cter in NEDD8).

It belongs to the cullin family. Interacts with CSN2 and RBX1A. Interacts with BTB/POZ domain-containing proteins BPM1, BPM2, BPM3, BPM6, BT1, BT2, BT3, BT5, AT1G01640, AT1G21780 and AT5G48510. Interacts with SR1IP1. Interacts with NPR3 and NPR4. Binds to NPR1; this interaction requires NPR3 and NPR4. In terms of processing, neddylated. Deneddylated via its interaction with the COP9 signalosome (CSN) complex.

Component of the cullin-RING ubiquitin ligases (CRL), or CUL3-RBX1-BTB protein E3 ligase complexes which mediate the ubiquitination and subsequent proteasomal degradation of target proteins. The functional specificity of the CRL complex depends on the BTB domain-containing protein as the substrate recognition component. Involved in embryo pattern formation and endosperm development. Required for the normal division and organization of the root stem cells and columella root cap cells. Regulates primary root growth by an unknown pathway, but in an ethylene-dependent manner. Functions in distal root patterning, by an ethylene-independent mechanism. Functionally redundant with CUL3B. This Arabidopsis thaliana (Mouse-ear cress) protein is Cullin-3A.